The primary structure comprises 310 residues: p-hydroxybenzoic acid efflux pump subunit AaeA (310 aa).

A helical membrane pass occupies residues 12 to 32; sequence AITVVLVILAFIAIFNAWVYY.

The protein belongs to the membrane fusion protein (MFP) (TC 8.A.1) family.

It is found in the cell inner membrane. Its function is as follows. Forms an efflux pump with AaeB. This is p-hydroxybenzoic acid efflux pump subunit AaeA from Escherichia coli O7:K1 (strain IAI39 / ExPEC).